The primary structure comprises 156 residues: Transcription factor MafF (156 aa).

The tract at residues arginine 51–lysine 76 is basic motif. In terms of domain architecture, bZIP spans arginine 51 to leucine 114. Positions leucine 79–leucine 93 are leucine-zipper.

This sequence belongs to the bZIP family. Maf subfamily. In terms of assembly, monomer and homo- or heterodimer. Interacts with MIP. Forms high affinity heterodimers with members of the CNC-bZIP family such as NFE2L1/NRF1. In terms of tissue distribution, highly expressed in the lung, lower expression in the brain, thymus, liver, spleen, intestine, kidney, heart, muscle, and ovary. Not significantly expressed in hematopoietic cells.

It is found in the nucleus. Since they lack a putative transactivation domain, the small Mafs behave as transcriptional repressors when they dimerize among themselves. However, they seem to serve as transcriptional activators by dimerizing with other (usually larger) basic-zipper proteins, such as NFE2L1/NRF1, and recruiting them to specific DNA-binding sites. Interacts with the upstream promoter region of the oxytocin receptor gene. May be a transcriptional enhancer in the up-regulation of the oxytocin receptor gene at parturition. This is Transcription factor MafF (Maff) from Mus musculus (Mouse).